Reading from the N-terminus, the 312-residue chain is tRNA dimethylallyltransferase (312 aa).

18–25 contacts ATP; the sequence is GPTASGKS. 20-25 contributes to the substrate binding site; sequence TASGKS. Interaction with substrate tRNA regions lie at residues 43–46 and 167–171; these read DSMQ and QRILR.

Belongs to the IPP transferase family. In terms of assembly, monomer. Mg(2+) is required as a cofactor.

It carries out the reaction adenosine(37) in tRNA + dimethylallyl diphosphate = N(6)-dimethylallyladenosine(37) in tRNA + diphosphate. Functionally, catalyzes the transfer of a dimethylallyl group onto the adenine at position 37 in tRNAs that read codons beginning with uridine, leading to the formation of N6-(dimethylallyl)adenosine (i(6)A). In Azorhizobium caulinodans (strain ATCC 43989 / DSM 5975 / JCM 20966 / LMG 6465 / NBRC 14845 / NCIMB 13405 / ORS 571), this protein is tRNA dimethylallyltransferase.